The chain runs to 61 residues: Small ribosomal subunit protein uS14 (61 aa).

Residues Cys-24, Cys-27, Cys-40, and Cys-43 each coordinate Zn(2+).

It belongs to the universal ribosomal protein uS14 family. Zinc-binding uS14 subfamily. As to quaternary structure, part of the 30S ribosomal subunit. Contacts proteins S3 and S10. Zn(2+) serves as cofactor.

Binds 16S rRNA, required for the assembly of 30S particles and may also be responsible for determining the conformation of the 16S rRNA at the A site. The sequence is that of Small ribosomal subunit protein uS14 from Clostridioides difficile (strain 630) (Peptoclostridium difficile).